The sequence spans 53 residues: HOXB-AS3 peptide (53 aa).

The tract at residues 1–53 (MPVLPGTQRYPHQRRRFQAAGGGAESGKRGSEEAPGVAWSGSESGRDAATPAW) is disordered.

Interacts with HNRNPA1 (via the RGG-box). Interacts with IGF2BP2.

In terms of biological role, blocks the binding of HNRNPA1 to the intronic sequences flanking exon 9 of the PKM gene by competitively binding to the HNRNPA1 RGG-box motif. This inhibits inclusion of exon 9 and promotes inclusion of exon 10, suppressing formation of the PKM M2 isoform and promoting production of the M1 isoform. Also suppresses HNRNPA1-mediated processing of microRNA 18a (miR-18a). Promotes MYC stability through interaction with IGF2BP2. The polypeptide is HOXB-AS3 peptide (Homo sapiens (Human)).